Here is a 159-residue protein sequence, read N- to C-terminus: Major latex protein 149 (159 aa).

Belongs to the MLP family. As to expression, laticifer.

The protein localises to the vacuole. Its subcellular location is the cytoplasmic vesicle. Not known; MLPs constitute up to 50% of the soluble latex protein. The protein is Major latex protein 149 (MLP149) of Papaver somniferum (Opium poppy).